A 316-amino-acid chain; its full sequence is Exonuclease DPD1, chloroplastic/mitochondrial (316 aa).

A chloroplast and mitochondrion-targeting transit peptide spans 1–63 (MCISISQVSR…NVSTTTQGSR (63 aa)). An Exonuclease domain is found at 112 to 282 (IVSDLETTGL…SDVLLLSKVF (171 aa)). The Mg(2+) site is built by D115 and E117. Residue H269 is the Proton donor/acceptor of the active site. D274 lines the Mg(2+) pocket.

This sequence belongs to the exonuclease superfamily. TREX family. The cofactor is Mg(2+). Highly expressed in mature pollen grains. Detected in flowers, senescing leaves and roots.

The protein resides in the plastid. The protein localises to the chloroplast. Its subcellular location is the mitochondrion. Its activity is regulated as follows. Inhibited by free nucleotide diphosphates (NDPs). In terms of biological role, exonuclease required for organelle DNA degradation during pollen development. Plays non-essential roles in maternal inheritance. May be part of the DNA salvage machinery. This chain is Exonuclease DPD1, chloroplastic/mitochondrial, found in Arabidopsis thaliana (Mouse-ear cress).